Reading from the N-terminus, the 367-residue chain is Quinolinate synthase (367 aa).

Positions 45 and 62 each coordinate iminosuccinate. [4Fe-4S] cluster is bound at residue Cys-109. Residues 140 to 142 and Ser-161 each bind iminosuccinate; that span reads YVN. Cys-229 contributes to the [4Fe-4S] cluster binding site. Residues 255–257 and Thr-272 contribute to the iminosuccinate site; that span reads HPE. Residue Cys-319 coordinates [4Fe-4S] cluster.

The protein belongs to the quinolinate synthase family. Type 3 subfamily. Requires [4Fe-4S] cluster as cofactor.

It localises to the cytoplasm. The catalysed reaction is iminosuccinate + dihydroxyacetone phosphate = quinolinate + phosphate + 2 H2O + H(+). It participates in cofactor biosynthesis; NAD(+) biosynthesis; quinolinate from iminoaspartate: step 1/1. Functionally, catalyzes the condensation of iminoaspartate with dihydroxyacetone phosphate to form quinolinate. The chain is Quinolinate synthase from Halalkalibacterium halodurans (strain ATCC BAA-125 / DSM 18197 / FERM 7344 / JCM 9153 / C-125) (Bacillus halodurans).